The chain runs to 192 residues: dTTP/UTP pyrophosphatase (192 aa).

D65 serves as the catalytic Proton acceptor.

It belongs to the Maf family. YhdE subfamily. A divalent metal cation serves as cofactor.

It localises to the cytoplasm. The enzyme catalyses dTTP + H2O = dTMP + diphosphate + H(+). It catalyses the reaction UTP + H2O = UMP + diphosphate + H(+). Nucleoside triphosphate pyrophosphatase that hydrolyzes dTTP and UTP. May have a dual role in cell division arrest and in preventing the incorporation of modified nucleotides into cellular nucleic acids. This is dTTP/UTP pyrophosphatase from Fusobacterium nucleatum subsp. nucleatum (strain ATCC 25586 / DSM 15643 / BCRC 10681 / CIP 101130 / JCM 8532 / KCTC 2640 / LMG 13131 / VPI 4355).